We begin with the raw amino-acid sequence, 341 residues long: Nicotinate-nucleotide--dimethylbenzimidazole phosphoribosyltransferase (341 aa).

The Proton acceptor role is filled by glutamate 306.

It belongs to the CobT family.

It carries out the reaction 5,6-dimethylbenzimidazole + nicotinate beta-D-ribonucleotide = alpha-ribazole 5'-phosphate + nicotinate + H(+). The protein operates within nucleoside biosynthesis; alpha-ribazole biosynthesis; alpha-ribazole from 5,6-dimethylbenzimidazole: step 1/2. Functionally, catalyzes the synthesis of alpha-ribazole-5'-phosphate from nicotinate mononucleotide (NAMN) and 5,6-dimethylbenzimidazole (DMB). The protein is Nicotinate-nucleotide--dimethylbenzimidazole phosphoribosyltransferase of Methylocella silvestris (strain DSM 15510 / CIP 108128 / LMG 27833 / NCIMB 13906 / BL2).